The primary structure comprises 141 residues: Large ribosomal subunit protein uL11 (141 aa).

The protein belongs to the universal ribosomal protein uL11 family. As to quaternary structure, part of the ribosomal stalk of the 50S ribosomal subunit. Interacts with L10 and the large rRNA to form the base of the stalk. L10 forms an elongated spine to which L12 dimers bind in a sequential fashion forming a multimeric L10(L12)X complex. One or more lysine residues are methylated.

Its function is as follows. Forms part of the ribosomal stalk which helps the ribosome interact with GTP-bound translation factors. The protein is Large ribosomal subunit protein uL11 of Ruegeria pomeroyi (strain ATCC 700808 / DSM 15171 / DSS-3) (Silicibacter pomeroyi).